The chain runs to 317 residues: Ornithine carbamoyltransferase (317 aa).

Residues S57–T60, Q84, R108, and H135–Q138 contribute to the carbamoyl phosphate site. L-ornithine-binding positions include N166, D230, and S234–M235. Carbamoyl phosphate is bound by residues C270 to L271 and R298.

The protein belongs to the aspartate/ornithine carbamoyltransferase superfamily. OTCase family. In terms of assembly, homododecamer.

The protein localises to the cytoplasm. It carries out the reaction carbamoyl phosphate + L-ornithine = L-citrulline + phosphate + H(+). Its pathway is amino-acid biosynthesis; L-arginine biosynthesis; L-arginine from L-ornithine and carbamoyl phosphate: step 1/3. In terms of biological role, reversibly catalyzes the transfer of the carbamoyl group from carbamoyl phosphate (CP) to the N(epsilon) atom of ornithine (ORN) to produce L-citrulline. This is Ornithine carbamoyltransferase from Pyrococcus horikoshii (strain ATCC 700860 / DSM 12428 / JCM 9974 / NBRC 100139 / OT-3).